A 37-amino-acid polypeptide reads, in one-letter code: Large ribosomal subunit protein bL36 (37 aa).

This sequence belongs to the bacterial ribosomal protein bL36 family.

The chain is Large ribosomal subunit protein bL36 from Francisella tularensis subsp. tularensis (strain FSC 198).